Consider the following 200-residue polypeptide: NADH-quinone oxidoreductase subunit C (200 aa).

It belongs to the complex I 30 kDa subunit family. In terms of assembly, NDH-1 is composed of 14 different subunits. Subunits NuoB, C, D, E, F, and G constitute the peripheral sector of the complex.

Its subcellular location is the cell inner membrane. It carries out the reaction a quinone + NADH + 5 H(+)(in) = a quinol + NAD(+) + 4 H(+)(out). Its function is as follows. NDH-1 shuttles electrons from NADH, via FMN and iron-sulfur (Fe-S) centers, to quinones in the respiratory chain. The immediate electron acceptor for the enzyme in this species is believed to be ubiquinone. Couples the redox reaction to proton translocation (for every two electrons transferred, four hydrogen ions are translocated across the cytoplasmic membrane), and thus conserves the redox energy in a proton gradient. This Burkholderia ambifaria (strain ATCC BAA-244 / DSM 16087 / CCUG 44356 / LMG 19182 / AMMD) (Burkholderia cepacia (strain AMMD)) protein is NADH-quinone oxidoreductase subunit C.